Reading from the N-terminus, the 974-residue chain is ATP-dependent RNA helicase glh-2 (974 aa).

The segment at 212-435 is disordered; that stretch reads HESGFGGGKS…SGFGGGNDGG (224 aa). Gly residues predominate over residues 215 to 250; that stretch reads GFGGGKSGGFGGGNSGGSGFGSGGNSNGFGSGGGGQ. The span at 256–267 shows a compositional bias: polar residues; it reads NNNCFNCQQPGH. 2 CCHC-type zinc fingers span residues 257 to 274 and 282 to 299; these read NNCFNCQQPGHRSNDCPE and RVCYNCQQPGHNSRDCPE. 2 stretches are compositionally biased toward basic and acidic residues: residues 268–282 and 293–307; these read RSNDCPEPKKEREPR and NSRDCPEERKPREGR. The segment covering 309-364 has biased composition (gly residues); that stretch reads GFTGGSSGFGGGNGGGTGFDSGLTNGFGSGNNGESGFGSGGFGGNSNGFGSGGGGQ. Over residues 370–381 the composition is skewed to polar residues; sequence NNNCFNCQQPGH. 2 consecutive CCHC-type zinc fingers follow at residues 371–388 and 396–413; these read NNCFNCQQPGHRSNDCPE and RVCYNCQQPGHNSRDCPE. Basic and acidic residues-rich tracts occupy residues 382–396 and 407–421; these read RSNDCPEPKKEREPR and NSRDCPEERKPREGR. Over residues 426-435 the composition is skewed to gly residues; sequence SGFGGGNDGG. 2 consecutive CCHC-type zinc fingers follow at residues 453 to 470 and 473 to 490; these read MKCFNCKGEGHRSAECPE and RGCFNCGEQGHRSNECPN. The Q motif motif lies at 552–580; it reads KTFSEANLGETMKKNVAHAGYTKTTPIQQ. Positions 583–767 constitute a Helicase ATP-binding domain; the sequence is LPLIHQGHDI…RNHLKEGYIM (185 aa). 596–603 serves as a coordination point for ATP; sequence AQTGSGKT. Residues 710-713 carry the DEAD box motif; sequence DEAD. Residues 803 to 950 form the Helicase C-terminal domain; the sequence is DIDSYTTEKN…LVPEWMQGAS (148 aa).

It belongs to the DEAD box helicase family. DDX4/VASA subfamily. Interacts (via C-terminus) with kgb-1.

The catalysed reaction is ATP + H2O = ADP + phosphate + H(+). Its function is as follows. Probable ATP-binding RNA helicase. This is ATP-dependent RNA helicase glh-2 (glh-2) from Caenorhabditis elegans.